Reading from the N-terminus, the 329-residue chain is Ribosomal protein L11 methyltransferase (329 aa).

S-adenosyl-L-methionine is bound by residues T177, G198, D220, and N264.

The protein belongs to the methyltransferase superfamily. PrmA family.

It localises to the cytoplasm. The enzyme catalyses L-lysyl-[protein] + 3 S-adenosyl-L-methionine = N(6),N(6),N(6)-trimethyl-L-lysyl-[protein] + 3 S-adenosyl-L-homocysteine + 3 H(+). Functionally, methylates ribosomal protein L11. The chain is Ribosomal protein L11 methyltransferase from Helicobacter pylori (strain Shi470).